Here is a 255-residue protein sequence, read N- to C-terminus: Type III pantothenate kinase (255 aa).

Residue 6–13 (DVGNTNTV) coordinates ATP. 108-111 (GADR) provides a ligand contact to substrate. Aspartate 110 serves as the catalytic Proton acceptor. K(+) is bound at residue aspartate 130. Threonine 133 contacts ATP. Threonine 185 is a substrate binding site.

Belongs to the type III pantothenate kinase family. In terms of assembly, homodimer. NH4(+) is required as a cofactor. The cofactor is K(+).

It localises to the cytoplasm. The catalysed reaction is (R)-pantothenate + ATP = (R)-4'-phosphopantothenate + ADP + H(+). The protein operates within cofactor biosynthesis; coenzyme A biosynthesis; CoA from (R)-pantothenate: step 1/5. Catalyzes the phosphorylation of pantothenate (Pan), the first step in CoA biosynthesis. The chain is Type III pantothenate kinase from Hyphomonas neptunium (strain ATCC 15444).